Reading from the N-terminus, the 78-residue chain is Short neurotoxin SNTX26 (78 aa).

Residues 1–21 (MKTLLLTFLVVTIVCLDLGYT) form the signal peptide. 4 disulfides stabilise this stretch: Cys24/Cys40, Cys33/Cys58, Cys62/Cys70, and Cys71/Cys76.

It belongs to the three-finger toxin family. Short-chain subfamily. In terms of tissue distribution, expressed by the venom gland.

The protein resides in the secreted. This three-finger toxin binds and inhibits the nicotinic acetylcholine receptor (nAChR). This Ophiophagus hannah (King cobra) protein is Short neurotoxin SNTX26.